The chain runs to 245 residues: 5-oxoprolinase subunit A (245 aa).

Belongs to the LamB/PxpA family. As to quaternary structure, forms a complex composed of PxpA, PxpB and PxpC.

It catalyses the reaction 5-oxo-L-proline + ATP + 2 H2O = L-glutamate + ADP + phosphate + H(+). In terms of biological role, catalyzes the cleavage of 5-oxoproline to form L-glutamate coupled to the hydrolysis of ATP to ADP and inorganic phosphate. This chain is 5-oxoprolinase subunit A, found in Haemophilus influenzae (strain PittGG).